The following is a 389-amino-acid chain: Sulfate adenylyltransferase (389 aa).

The protein belongs to the sulfate adenylyltransferase family.

The enzyme catalyses sulfate + ATP + H(+) = adenosine 5'-phosphosulfate + diphosphate. It participates in sulfur metabolism; hydrogen sulfide biosynthesis; sulfite from sulfate: step 1/3. The sequence is that of Sulfate adenylyltransferase from Hyperthermus butylicus (strain DSM 5456 / JCM 9403 / PLM1-5).